Reading from the N-terminus, the 692-residue chain is Elongation factor G (692 aa).

In terms of domain architecture, tr-type G spans 8–283; that stretch reads QDLRNIGIVA…AVVDYLPSPL (276 aa). GTP contacts are provided by residues 17–24, 81–85, and 135–138; these read AHIDAGKT, DTPGH, and NKLD.

Belongs to the TRAFAC class translation factor GTPase superfamily. Classic translation factor GTPase family. EF-G/EF-2 subfamily.

The protein localises to the cytoplasm. Functionally, catalyzes the GTP-dependent ribosomal translocation step during translation elongation. During this step, the ribosome changes from the pre-translocational (PRE) to the post-translocational (POST) state as the newly formed A-site-bound peptidyl-tRNA and P-site-bound deacylated tRNA move to the P and E sites, respectively. Catalyzes the coordinated movement of the two tRNA molecules, the mRNA and conformational changes in the ribosome. The protein is Elongation factor G of Hydrogenobaculum sp. (strain Y04AAS1).